Consider the following 531-residue polypeptide: UDP-glucuronosyltransferase 1A3 (531 aa).

Residues 1-25 (MGIQGFLQKLSGLLLLLCALPWAEG) form the signal peptide. Residues Asn116, Asn139, Asn293, and Asn431 are each glycosylated (N-linked (GlcNAc...) asparagine). A helical transmembrane segment spans residues 489 to 505 (VIGFLLAIVLTVVFIVY).

Belongs to the UDP-glycosyltransferase family. Homodimers. Homooligomer. Interacts with UGT1A1, UGT1A4, UGT1A6, UGT1A7, UGT1A8, UGT1A9 and UGT1A10 to form heterodimers.

The protein resides in the endoplasmic reticulum membrane. The enzyme catalyses glucuronate acceptor + UDP-alpha-D-glucuronate = acceptor beta-D-glucuronoside + UDP + H(+). The catalysed reaction is 17beta-estradiol + UDP-alpha-D-glucuronate = 17beta-estradiol 3-O-(beta-D-glucuronate) + UDP + H(+). It catalyses the reaction 17beta-estradiol + UDP-alpha-D-glucuronate = 17beta-estradiol 17-O-(beta-D-glucuronate) + UDP + H(+). It carries out the reaction 17alpha-estradiol + UDP-alpha-D-glucuronate = 17alpha-estradiol 3-O-(beta-D-glucuronate) + UDP + H(+). The enzyme catalyses estrone + UDP-alpha-D-glucuronate = estrone 3-O-(beta-D-glucuronate) + UDP + H(+). The catalysed reaction is chenodeoxycholate + UDP-alpha-D-glucuronate = chenodeoxycholoyl-24-O-(beta-D-glucuronate) + UDP. It catalyses the reaction deoxycholate + UDP-alpha-D-glucuronate = deoxycholoyl-24-O-(beta-D-glucuronate) + UDP. It carries out the reaction lithocholate + UDP-alpha-D-glucuronate = lithocholoyl-24-O-(beta-D-glucuronate) + UDP. The enzyme catalyses hyodeoxycholate + UDP-alpha-D-glucuronate = hyodeoxycholoyl-24-O-(beta-D-glucuronate) + UDP. The catalysed reaction is hyocholate + UDP-alpha-D-glucuronate = hyocholoyl-24-O-(beta-D-glucuronate) + UDP. It catalyses the reaction calcidiol + UDP-alpha-D-glucuronate = calcidiol 25-O-(beta-D-glucuronide) + UDP + H(+). It carries out the reaction losartan + UDP-alpha-D-glucuronate = losartan-2-N-beta-D-glucuronide + UDP. The enzyme catalyses candesartan + UDP-alpha-D-glucuronate = candesartan-2-N-beta-D-glucuronide + UDP. The catalysed reaction is zolasartan + UDP-alpha-D-glucuronate = zolarsartan-2-N-beta-D-glucuronide + UDP. It catalyses the reaction (E)-ferulate + UDP-alpha-D-glucuronate = (E)-4-O-(beta-D-glucuronosyl)-ferulate + UDP + H(+). It carries out the reaction (E)-ferulate + UDP-alpha-D-glucuronate = (E)-ferulic acid beta-D-glucuronate ester + UDP. Functionally, UDP-glucuronosyltransferase (UGT) that catalyzes phase II biotransformation reactions in which lipophilic substrates are conjugated with glucuronic acid to increase the metabolite's water solubility, thereby facilitating excretion into either the urine or bile. Essential for the elimination and detoxification of drugs, xenobiotics and endogenous compounds. Catalyzes the glucuronidation of endogenous estrogen hormones such as estradiol and estrone. Contributes to bile acid (BA) detoxification by catalyzing the glucuronidation of BA substrates, which are natural detergents for dietary lipids absorption. Involved in the glucuronidation of calcidiol, which is the major circulating form of vitamin D3, essential for the regulation of calcium and phosphate homeostasis. Involved in the glucuronidation of the phytochemical ferulic acid at the phenolic or the carboxylic acid group. Involved in the glucuronidation of the AGTR1 angiotensin receptor antagonists losartan, candesartan and zolarsartan, which can inhibit the effect of angiotensin II. This Rattus norvegicus (Rat) protein is UDP-glucuronosyltransferase 1A3.